Here is a 77-residue protein sequence, read N- to C-terminus: Translation initiation factor IF-1, chloroplastic (77 aa).

Residues 1-71 form the S1-like domain; that stretch reads MKEQKWIHEG…TRGRIIYRLR (71 aa).

The protein belongs to the IF-1 family. Component of the 30S ribosomal translation pre-initiation complex which assembles on the 30S ribosome in the order IF-2 and IF-3, IF-1 and N-formylmethionyl-tRNA(fMet); mRNA recruitment can occur at any time during PIC assembly.

The protein resides in the plastid. It localises to the chloroplast. One of the essential components for the initiation of protein synthesis. Stabilizes the binding of IF-2 and IF-3 on the 30S subunit to which N-formylmethionyl-tRNA(fMet) subsequently binds. Helps modulate mRNA selection, yielding the 30S pre-initiation complex (PIC). Upon addition of the 50S ribosomal subunit IF-1, IF-2 and IF-3 are released leaving the mature 70S translation initiation complex. The chain is Translation initiation factor IF-1, chloroplastic from Daucus carota (Wild carrot).